A 353-amino-acid polypeptide reads, in one-letter code: Photosystem II protein D1 (353 aa).

The next 3 membrane-spanning stretches (helical) occupy residues 29–46 (YVGWFGVIMIPTLLTATI), 118–133 (HFLIGIFCYMGREWEL), and 142–156 (WICVAYSAPVAAATA). H118 lines the chlorophyll a pocket. Pheophytin a is bound at residue Y126. 2 residues coordinate [CaMn4O5] cluster: D170 and E189. Residues 197-218 (FHMLGVAGVFGGSLFSAMHGSL) form a helical membrane-spanning segment. A chlorophyll a-binding site is contributed by H198. A quinone-binding positions include H215 and 264-265 (SF). H215 is a binding site for Fe cation. H272 contacts Fe cation. A helical transmembrane segment spans residues 274 to 288 (FLAAWPVVGIWFTSL). [CaMn4O5] cluster is bound by residues H332, E333, D342, and A344. A propeptide spanning residues 345-353 (AVKAPSIIG) is cleaved from the precursor.

The protein belongs to the reaction center PufL/M/PsbA/D family. As to quaternary structure, PSII is composed of 1 copy each of membrane proteins PsbA, PsbB, PsbC, PsbD, PsbE, PsbF, PsbH, PsbI, PsbJ, PsbK, PsbL, PsbM, PsbT, PsbX, PsbY, PsbZ, Psb30/Ycf12, peripheral proteins PsbO, CyanoQ (PsbQ), PsbU, PsbV and a large number of cofactors. It forms dimeric complexes. Requires The D1/D2 heterodimer binds P680, chlorophylls that are the primary electron donor of PSII, and subsequent electron acceptors. It shares a non-heme iron and each subunit binds pheophytin, quinone, additional chlorophylls, carotenoids and lipids. D1 provides most of the ligands for the Mn4-Ca-O5 cluster of the oxygen-evolving complex (OEC). There is also a Cl(-1) ion associated with D1 and D2, which is required for oxygen evolution. The PSII complex binds additional chlorophylls, carotenoids and specific lipids. as cofactor. Tyr-161 forms a radical intermediate that is referred to as redox-active TyrZ, YZ or Y-Z. Post-translationally, C-terminally processed by CtpA; processing is essential to allow assembly of the oxygen-evolving complex and thus photosynthetic growth.

The protein localises to the cellular thylakoid membrane. It carries out the reaction 2 a plastoquinone + 4 hnu + 2 H2O = 2 a plastoquinol + O2. Its function is as follows. Photosystem II (PSII) is a light-driven water:plastoquinone oxidoreductase that uses light energy to abstract electrons from H(2)O, generating O(2) and a proton gradient subsequently used for ATP formation. It consists of a core antenna complex that captures photons, and an electron transfer chain that converts photonic excitation into a charge separation. The D1/D2 (PsbA/PsbD) reaction center heterodimer binds P680, the primary electron donor of PSII as well as several subsequent electron acceptors. This Prochlorothrix hollandica protein is Photosystem II protein D1.